Consider the following 234-residue polypeptide: Small ribosomal subunit protein uS10m (234 aa).

The N-terminal 23 residues, 1–23 (MLRIGYRGFSTRSRVFKLSPQEY), are a transit peptide targeting the mitochondrion.

The protein belongs to the universal ribosomal protein uS10 family. Component of the mitochondrial small ribosomal subunit (mt-SSU).

It localises to the mitochondrion. Component of the mitochondrial ribosome (mitoribosome), a dedicated translation machinery responsible for the synthesis of mitochondrial genome-encoded proteins, including at least some of the essential transmembrane subunits of the mitochondrial respiratory chain. The mitoribosomes are attached to the mitochondrial inner membrane and translation products are cotranslationally integrated into the membrane. In Candida albicans (strain SC5314 / ATCC MYA-2876) (Yeast), this protein is Small ribosomal subunit protein uS10m (RSM10).